The primary structure comprises 414 residues: L-cysteine:1D-myo-inositol 2-amino-2-deoxy-alpha-D-glucopyranoside ligase (414 aa).

Residues 1 to 38 form a disordered region; it reads MRSWPAPEVPNLPEAGLPGPALPLHLHDTATGTVRPTR. Low complexity predominate over residues 11-38; the sequence is NLPEAGLPGPALPLHLHDTATGTVRPTR. Cysteine 48 serves as a coordination point for Zn(2+). L-cysteinyl-5'-AMP is bound by residues 48 to 51, threonine 63, and 86 to 88; these read CGIT and NVT. A 'HIGH' region motif is present at residues 50-60; the sequence is ITPYDATHLGH. The 'ERGGDP' region signature appears at 188–193; sequence ERGGDP. Residue tryptophan 228 participates in L-cysteinyl-5'-AMP binding. Cysteine 232 lines the Zn(2+) pocket. Position 250–252 (250–252) interacts with L-cysteinyl-5'-AMP; the sequence is GSD. Residue histidine 257 coordinates Zn(2+). An L-cysteinyl-5'-AMP-binding site is contributed by valine 284. Residues 290 to 294 carry the 'KMSKS' region motif; the sequence is KMSKS.

Belongs to the class-I aminoacyl-tRNA synthetase family. MshC subfamily. Monomer. Requires Zn(2+) as cofactor.

It catalyses the reaction 1D-myo-inositol 2-amino-2-deoxy-alpha-D-glucopyranoside + L-cysteine + ATP = 1D-myo-inositol 2-(L-cysteinylamino)-2-deoxy-alpha-D-glucopyranoside + AMP + diphosphate + H(+). Functionally, catalyzes the ATP-dependent condensation of GlcN-Ins and L-cysteine to form L-Cys-GlcN-Ins. The chain is L-cysteine:1D-myo-inositol 2-amino-2-deoxy-alpha-D-glucopyranoside ligase from Thermomonospora curvata (strain ATCC 19995 / DSM 43183 / JCM 3096 / KCTC 9072 / NBRC 15933 / NCIMB 10081 / Henssen B9).